The chain runs to 70 residues: UPF0352 protein PBPRA2586 (70 aa).

This sequence belongs to the UPF0352 family.

In Photobacterium profundum (strain SS9), this protein is UPF0352 protein PBPRA2586.